The following is a 520-amino-acid chain: Probable cytochrome P450 6v1 (520 aa).

Heme is bound at residue Cys465.

This sequence belongs to the cytochrome P450 family. It depends on heme as a cofactor.

Its subcellular location is the endoplasmic reticulum membrane. The protein resides in the microsome membrane. May be involved in the metabolism of insect hormones and in the breakdown of synthetic insecticides. The protein is Probable cytochrome P450 6v1 (Cyp6v1) of Drosophila melanogaster (Fruit fly).